The following is a 771-amino-acid chain: 5-methyltetrahydropteroyltriglutamate--homocysteine methyltransferase (771 aa).

5-methyltetrahydropteroyltri-L-glutamate is bound by residues 13-16 (RELK) and Lys128. Residues 451–453 (IGS) and Glu504 each bind L-homocysteine. L-methionine contacts are provided by residues 451 to 453 (IGS) and Glu504. 5-methyltetrahydropteroyltri-L-glutamate-binding positions include 535–536 (RC) and Trp581. Residue Asp619 coordinates L-homocysteine. Asp619 lines the L-methionine pocket. Glu625 serves as a coordination point for 5-methyltetrahydropteroyltri-L-glutamate. Zn(2+) is bound by residues His661, Cys663, and Glu685. Residue His714 is the Proton donor of the active site. Cys746 contacts Zn(2+).

It belongs to the vitamin-B12 independent methionine synthase family. The cofactor is Zn(2+).

It catalyses the reaction 5-methyltetrahydropteroyltri-L-glutamate + L-homocysteine = tetrahydropteroyltri-L-glutamate + L-methionine. The protein operates within amino-acid biosynthesis; L-methionine biosynthesis via de novo pathway; L-methionine from L-homocysteine (MetE route): step 1/1. In terms of biological role, catalyzes the transfer of a methyl group from 5-methyltetrahydrofolate to homocysteine resulting in methionine formation. This is 5-methyltetrahydropteroyltriglutamate--homocysteine methyltransferase from Nitrobacter winogradskyi (strain ATCC 25391 / DSM 10237 / CIP 104748 / NCIMB 11846 / Nb-255).